The sequence spans 393 residues: BEN domain-containing protein 5 (393 aa).

A coiled-coil region spans residues 169–212 (RVLYEELLRSYQQQQQEMKHIQHELERTRKQLVQQAKKLKDYGS). The BEN domain occupies 274–380 (GSGVWVNEEK…EKIMDINKSC (107 aa)).

In terms of biological role, may act as a transcriptional repressor. This is BEN domain-containing protein 5 (bend5) from Xenopus laevis (African clawed frog).